A 103-amino-acid polypeptide reads, in one-letter code: uncharacterized protein (103 aa).

The protein resides in the plastid. It is found in the chloroplast. This is an uncharacterized protein from Auxenochlorella pyrenoidosa (Freshwater green alga).